Reading from the N-terminus, the 356-residue chain is Glutamine synthetase PR-1 (356 aa).

Residues 19-99 (VIAEYIWIGG…VICDAYTPAG (81 aa)) form the GS beta-grasp domain. Residues 41–64 (PGPVKNPSELPKWNYDGSSTGQAP) form a disordered region. The 251-residue stretch at 106–356 (KRHNAAKIFS…IADTTILWKP (251 aa)) folds into the GS catalytic domain.

The protein belongs to the glutamine synthetase family. As to quaternary structure, homooctamer. In terms of tissue distribution, roots.

It localises to the cytoplasm. It carries out the reaction L-glutamate + NH4(+) + ATP = L-glutamine + ADP + phosphate + H(+). The chain is Glutamine synthetase PR-1 from Phaseolus vulgaris (Kidney bean).